An 810-amino-acid chain; its full sequence is Leucine--tRNA ligase (810 aa).

Residues 43-53 (PYPSGTLHIGH) carry the 'HIGH' region motif. The short motif at 578–582 (KMSKS) is the 'KMSKS' region element. Position 581 (K581) interacts with ATP.

This sequence belongs to the class-I aminoacyl-tRNA synthetase family.

Its subcellular location is the cytoplasm. It catalyses the reaction tRNA(Leu) + L-leucine + ATP = L-leucyl-tRNA(Leu) + AMP + diphosphate. This Solibacter usitatus (strain Ellin6076) protein is Leucine--tRNA ligase.